A 746-amino-acid polypeptide reads, in one-letter code: UvrABC system protein C (746 aa).

Residues 18 to 97 enclose the GIY-YIG domain; sequence AKPGVYKWRD…IKEFDPRFNV (80 aa). The 36-residue stretch at 211–246 folds into the UVR domain; sequence RPYIAQLTRDMKEASAELEFEKAARLRDQIQMLETV. The segment at 557 to 577 is disordered; sequence ANGNDNGEGGSDISGKGHAVP.

Belongs to the UvrC family. Interacts with UvrB in an incision complex.

It localises to the cytoplasm. The UvrABC repair system catalyzes the recognition and processing of DNA lesions. UvrC both incises the 5' and 3' sides of the lesion. The N-terminal half is responsible for the 3' incision and the C-terminal half is responsible for the 5' incision. The protein is UvrABC system protein C of Bifidobacterium longum (strain DJO10A).